The sequence spans 107 residues: Disintegrin lebestatin (107 aa).

The signal sequence occupies residues 1 to 20 (MIQVLLVIICLAVFPFQGSS). Positions 21 to 64 (KTLKSGNVNDYEVVNPGTVTGLPKGAVEEKHEPMKGNTLQKFPL) are excised as a propeptide. Intrachain disulfides connect cysteine 65/cysteine 74, cysteine 70/cysteine 93, cysteine 71/cysteine 98, and cysteine 83/cysteine 100. The Disintegrin domain occupies 65–105 (CTTGPCCRQCKLKPAGTTCWKTSRTSHYCTGKSCDCPSYPG). The Cell attachment site; atypical (KTS) signature appears at 85–87 (KTS). The propeptide occupies 106-107 (NG).

As to quaternary structure, monomer. As to expression, expressed by the venom gland.

It localises to the secreted. Specifically interacts with the alpha-1/beta-1 integrin (ITGA1/ITGB1). Exhibits highly inhibitory effects on cell adhesion and cell migration to collagens I and IV. Also shows in vivo anti-angiogenic activity. In Macrovipera lebetinus (Levantine viper), this protein is Disintegrin lebestatin.